Consider the following 677-residue polypeptide: Membrane-associated tyrosine- and threonine-specific cdc2-inhibitory kinase wee-1.3 (677 aa).

Over residues 1–22 (MDDTEGNSSMDSIRNGQSSPLP) the composition is skewed to polar residues. A disordered region spans residues 1–30 (MDDTEGNSSMDSIRNGQSSPLPQVTPRLPQ). A Protein kinase domain is found at 108 to 355 (FQIDEIIGRG…SRDLLDHPVI (248 aa)). Residues 114–122 (IGRGSFGEV) and Lys137 each bind ATP. Asp228 acts as the Proton acceptor in catalysis. Asn233 and Asp246 together coordinate Mg(2+). 2 disordered regions span residues 478–526 (FDND…GTPR) and 632–677 (EPSN…GDEV). A compositionally biased stretch (polar residues) spans 489 to 499 (ATCSSSNSSAI). A compositionally biased stretch (basic and acidic residues) spans 638–652 (TVDHHTILEQSESPR).

The protein belongs to the protein kinase superfamily. Ser/Thr protein kinase family. WEE1 subfamily.

Its subcellular location is the golgi apparatus membrane. It localises to the cytoplasm. The catalysed reaction is L-seryl-[protein] + ATP = O-phospho-L-seryl-[protein] + ADP + H(+). It catalyses the reaction L-threonyl-[protein] + ATP = O-phospho-L-threonyl-[protein] + ADP + H(+). Its function is as follows. Acts as a negative regulator of entry into mitosis (G2 to M transition) by phosphorylation of the CDK1 kinase during oocyte maturation. Required for oocyte maturation, embryonic development, germline proliferation and initiation of meiosis during spermatogenesis. Required for chromosome structure during mitosis and negative regulation of nuclear envelope breakdown. The protein is Membrane-associated tyrosine- and threonine-specific cdc2-inhibitory kinase wee-1.3 (wee-1.3) of Caenorhabditis elegans.